We begin with the raw amino-acid sequence, 37 residues long: MKVKPSVKKICDKCRVIRRHGRVMVICDNPRHKQRQG.

Belongs to the bacterial ribosomal protein bL36 family.

The chain is Large ribosomal subunit protein bL36 from Streptomyces avermitilis (strain ATCC 31267 / DSM 46492 / JCM 5070 / NBRC 14893 / NCIMB 12804 / NRRL 8165 / MA-4680).